The chain runs to 309 residues: Oxidoreductase NAD-binding domain-containing protein 1 (309 aa).

An N-terminal signal peptide occupies residues 1–14 (MVVVIPRLLRGSLG). One can recognise an FAD-binding FR-type domain in the interval 47 to 161 (HLERTADVVR…VGGEFFFDPK (115 aa)). 175-180 (GVGINP) lines the NAD(+) pocket.

In Bos taurus (Bovine), this protein is Oxidoreductase NAD-binding domain-containing protein 1 (OXNAD1).